We begin with the raw amino-acid sequence, 155 residues long: Deoxyuridine 5'-triphosphate nucleotidohydrolase (155 aa).

Substrate is bound by residues 74–76, Asn-87, and 91–93; these read RSG and TID.

This sequence belongs to the dUTPase family. It depends on Mg(2+) as a cofactor.

The catalysed reaction is dUTP + H2O = dUMP + diphosphate + H(+). Its pathway is pyrimidine metabolism; dUMP biosynthesis; dUMP from dCTP (dUTP route): step 2/2. This enzyme is involved in nucleotide metabolism: it produces dUMP, the immediate precursor of thymidine nucleotides and it decreases the intracellular concentration of dUTP so that uracil cannot be incorporated into DNA. The sequence is that of Deoxyuridine 5'-triphosphate nucleotidohydrolase from Cereibacter sphaeroides (strain KD131 / KCTC 12085) (Rhodobacter sphaeroides).